A 186-amino-acid chain; its full sequence is Lipid A palmitoyltransferase PagP (186 aa).

The first 25 residues, 1-25 (MKVSKYVAIFFFVFIQLISVGKVFA), serve as a signal peptide directing secretion. Active-site residues include His-58, Asp-101, and Ser-102.

Belongs to the lipid A palmitoyltransferase family. In terms of assembly, homodimer.

Its subcellular location is the cell outer membrane. It catalyses the reaction lipid A (E. coli) + a 1-hexadecanoyl-2-acyl-sn-glycero-3-phosphocholine = hepta-acyl lipid A (E. coli) + a 2-acyl-sn-glycero-3-phosphocholine. It carries out the reaction lipid IIA + a 1-hexadecanoyl-2-acyl-sn-glycero-3-phosphocholine = lipid IIB + a 2-acyl-sn-glycero-3-phosphocholine. The catalysed reaction is lipid IVA (E. coli) + a 1-hexadecanoyl-2-acyl-sn-glycero-3-phosphocholine = lipid IVB (E. coli) + a 2-acyl-sn-glycero-3-phosphocholine. Functionally, transfers a palmitate residue from the sn-1 position of a phospholipid to the N-linked hydroxymyristate on the proximal unit of lipid A or its precursors. This is Lipid A palmitoyltransferase PagP from Escherichia coli O6:K15:H31 (strain 536 / UPEC).